A 239-amino-acid chain; its full sequence is Isoprenyl transferase (239 aa).

Residue D16 is part of the active site. D16 lines the Mg(2+) pocket. Substrate is bound by residues 17–20, W21, R29, H33, and 61–63; these read GNGR and STE. The active-site Proton acceptor is N64. Substrate contacts are provided by residues W65, R67, R187, and 193 to 195; that span reads RLS. E206 serves as a coordination point for Mg(2+).

The protein belongs to the UPP synthase family. Homodimer. Mg(2+) is required as a cofactor.

Its function is as follows. Catalyzes the condensation of isopentenyl diphosphate (IPP) with allylic pyrophosphates generating different type of terpenoids. The polypeptide is Isoprenyl transferase (Lactobacillus johnsonii (strain CNCM I-12250 / La1 / NCC 533)).